We begin with the raw amino-acid sequence, 416 residues long: Transcription factor IIIB 50 kDa subunit (416 aa).

The TFIIB-type zinc-finger motif lies at 3 to 36; the sequence is NGSRCPDCGSSELVEDSHYSQSQLVCSDCGCVVT. Residues Cys7, Cys10, Cys28, and Cys31 each coordinate Zn(2+). A run of 2 repeats spans residues 72 to 157 and 173 to 249. Positions 108-114 are interaction with target DNA; that stretch reads AARLQKK. The interval 317–385 is disordered; it reads AEVETKQQQP…TGDEDISDSE (69 aa). Ser350 is modified (phosphoserine). The required for the formation of a ternary complex with DNA and TBP; not required for interaction with TBP in the absence of DNA stretch occupies residues 354–360; it reads LLPPCML. At Cys358 the chain carries Cysteine sulfenic acid (-SOH). The segment at 362–416 is required for interaction with TBP and formation of a ternary complex with DNA and TBP; that stretch reads PPKRTHTMPPDSVVTGDEDISDSEIEQYLRTPQEVRDFERAQAASRAAMSVPNPP.

Belongs to the TFIIB family. Component of TFIIIB complexes. The TFIIIB complex has two activities, alpha and beta. The TFIIIB-alpha activity complex is composed of TBP, BDP1, and a complex containing both BRF2 and at least four stably associated proteins; this complex inhibits the transcription by pol III via its phosphorylation by CK2; YY1 facilitates the TFIIIB-alpha complex formation. Interacts with TBP; this interaction promotes recruitment of BRF2 to TATA box-containing promoters. Interacts with TBP and the BURE sequence (GC-rich sequence downstream from the TATA box) to form a strong ternary complex which is joined by BDP1; this ternary complex stimulates pol III transcription. Forms a trimeric complex composed of TBP, BRF2 and mini-SNAPc complex (SNAP43, SNAP50, and the N-terminal third of SNAP190) on the promoter. Assembly of the TBP-BRF2 complex is stimulated by SNAP190. Interacts with MAF1 and SNAPC4. In terms of processing, in response to oxidative stress, Cys-358 is reversibly oxidized to cysteine sulfenic acid. Oxidation of Cys-358 impairs formation of a ternary complex with TBP and DNA and down-regulates expression of target genes in response to oxidative stress.

The protein resides in the nucleus. Its function is as follows. General activator of RNA polymerase III transcription. Factor exclusively required for RNA polymerase III transcription of genes with promoter elements upstream of the initiation sites. Contributes to the regulation of gene expression; functions as activator in the absence of oxidative stress. Down-regulates expression of target genes in response to oxidative stress. Overexpression protects cells against apoptosis in response to oxidative stress. The chain is Transcription factor IIIB 50 kDa subunit (Brf2) from Rattus norvegicus (Rat).